The following is a 487-amino-acid chain: Galactose-1-phosphate uridylyltransferase (487 aa).

It belongs to the galactose-1-phosphate uridylyltransferase type 2 family.

It is found in the cytoplasm. It catalyses the reaction alpha-D-galactose 1-phosphate + UDP-alpha-D-glucose = alpha-D-glucose 1-phosphate + UDP-alpha-D-galactose. It participates in carbohydrate metabolism; galactose metabolism. This chain is Galactose-1-phosphate uridylyltransferase, found in Lactiplantibacillus plantarum (strain ATCC BAA-793 / NCIMB 8826 / WCFS1) (Lactobacillus plantarum).